A 143-amino-acid polypeptide reads, in one-letter code: UPF0763 protein HH_0976 (143 aa).

This sequence belongs to the UPF0763 family.

The chain is UPF0763 protein HH_0976 from Helicobacter hepaticus (strain ATCC 51449 / 3B1).